We begin with the raw amino-acid sequence, 379 residues long: Cobalt-precorrin-5B C(1)-methyltransferase (379 aa).

The protein belongs to the CbiD family.

It catalyses the reaction Co-precorrin-5B + S-adenosyl-L-methionine = Co-precorrin-6A + S-adenosyl-L-homocysteine. It participates in cofactor biosynthesis; adenosylcobalamin biosynthesis; cob(II)yrinate a,c-diamide from sirohydrochlorin (anaerobic route): step 6/10. Its function is as follows. Catalyzes the methylation of C-1 in cobalt-precorrin-5B to form cobalt-precorrin-6A. This chain is Cobalt-precorrin-5B C(1)-methyltransferase, found in Citrobacter koseri (strain ATCC BAA-895 / CDC 4225-83 / SGSC4696).